A 389-amino-acid chain; its full sequence is Na(+)/H(+) antiporter NhaA (389 aa).

11 helical membrane-spanning segments follow: residues 14-34 (AGGI…NSPL), 59-79 (LILW…GLEV), 95-115 (SLPT…YLLF), 124-144 (AGWA…MALL), 154-174 (VFLL…IALF), 177-197 (TDLS…LVGL), 213-233 (LILW…GVII), 257-277 (PWST…VYVG), 292-312 (IALG…YIAV), 328-348 (IAPV…IASL), and 363-383 (LGTL…LSKV).

It belongs to the NhaA Na(+)/H(+) (TC 2.A.33) antiporter family.

The protein resides in the cell inner membrane. The catalysed reaction is Na(+)(in) + 2 H(+)(out) = Na(+)(out) + 2 H(+)(in). Its function is as follows. Na(+)/H(+) antiporter that extrudes sodium in exchange for external protons. The sequence is that of Na(+)/H(+) antiporter NhaA from Shewanella baltica (strain OS155 / ATCC BAA-1091).